The chain runs to 131 residues: MVQLNGSYKLEKSDNFDAFLKELGVNFVTRNLAKSASPTVEVIVDGDSYTIKTSSTLKNSEIKFKLGEEFEEDRADGKKVQTSVTKEGDNKLVQVQKGDKPVTIVREFSEEGLTVTATVNGVTSVRFYKRQ.

(5Z,8Z,11Z,14Z)-eicosatetraenoate-binding positions include R106 and 126-128 (RFY). Residues R106 and 126–128 (RFY) contribute to the (9Z)-octadecenoate site.

It belongs to the calycin superfamily. Fatty-acid binding protein (FABP) family.

Its subcellular location is the cytoplasm. Functionally, FABPs are thought to play a role in the intracellular transport of long-chain fatty acids and their acyl-CoA esters. The protein is Fatty acid-binding protein of Tyrophagus putrescentiae (Mold mite).